Consider the following 355-residue polypeptide: UDP-3-O-acylglucosamine N-acyltransferase (355 aa).

H258 acts as the Proton acceptor in catalysis.

The protein belongs to the transferase hexapeptide repeat family. LpxD subfamily. Homotrimer.

It catalyses the reaction a UDP-3-O-[(3R)-3-hydroxyacyl]-alpha-D-glucosamine + a (3R)-hydroxyacyl-[ACP] = a UDP-2-N,3-O-bis[(3R)-3-hydroxyacyl]-alpha-D-glucosamine + holo-[ACP] + H(+). Its pathway is bacterial outer membrane biogenesis; LPS lipid A biosynthesis. In terms of biological role, catalyzes the N-acylation of UDP-3-O-acylglucosamine using 3-hydroxyacyl-ACP as the acyl donor. Is involved in the biosynthesis of lipid A, a phosphorylated glycolipid that anchors the lipopolysaccharide to the outer membrane of the cell. The sequence is that of UDP-3-O-acylglucosamine N-acyltransferase from Bradyrhizobium sp. (strain BTAi1 / ATCC BAA-1182).